The chain runs to 53 residues: Neuronal protein NP-190 (53 aa).

Mainly expressed in the fetal brain where it is specifically localized to the proximal axonal segments, cell bodies and growth cones. Lower level of expression was also detected in the fetal heart and the skeletal muscle. No expression in kidney, liver, lung or spleen.

The protein resides in the membrane. Its function is as follows. Neuronal antigen that may play a role in brain development. May be involved in neurite formation or axonal guidance. This chain is Neuronal protein NP-190, found in Sus scrofa (Pig).